The sequence spans 277 residues: MEWWTAFQAFILGVVEGLTEFLPISSTGHQIIVADLIGFGGERAKAFNIIIQLAAILAVVWEFRGKIFQVVRDLPSQRQAQRFTANLLIAFFPAVVLGVLFADLIHEWLFNPITVALALVVGGVVMLWAERRKHVIHAEHVDDMTWKDALKIGCAQCLAMVPGTSRSGATIIGGLLFGLSRKAATEFSFFLAMPTMVGAAVYSGYKYRDLFRPEDLPVFAVGFVTSFVFAMVAVRALLKFIGNHSYAAFAWYRIAFGLLILATWQFHLIDWSTAGEM.

Transmembrane regions (helical) follow at residues 47 to 67 (FNII…RGKI), 85 to 105 (ANLL…ADLI), 108 to 128 (WLFN…VMLW), 183 to 203 (AATE…AVYS), 218 to 238 (VFAV…RALL), and 249 to 269 (FAWY…FHLI).

The protein belongs to the UppP family.

It localises to the cell inner membrane. It carries out the reaction di-trans,octa-cis-undecaprenyl diphosphate + H2O = di-trans,octa-cis-undecaprenyl phosphate + phosphate + H(+). Catalyzes the dephosphorylation of undecaprenyl diphosphate (UPP). Confers resistance to bacitracin. This Pseudomonas aeruginosa (strain UCBPP-PA14) protein is Undecaprenyl-diphosphatase.